The following is a 527-amino-acid chain: Amidophosphoribosyltransferase (527 aa).

The segment at 1-30 (MAVDSDYVTDRAAGSRQTVTGQQPEQDLNS) is disordered. A propeptide spanning residues 1–34 (MAVDSDYVTDRAAGSRQTVTGQQPEQDLNSPREE) is cleaved from the precursor. Residues 15–29 (SRQTVTGQQPEQDLN) are compositionally biased toward polar residues. The Nucleophile role is filled by Cys-35. In terms of domain architecture, Glutamine amidotransferase type-2 spans 35–261 (CGVFGVWAPG…PGELLAIDAD (227 aa)). Cys-276 provides a ligand contact to [4Fe-4S] cluster. Ser-323, Asp-385, and Asp-386 together coordinate Mg(2+). [4Fe-4S] cluster is bound by residues Cys-422, Cys-478, and Cys-481.

This sequence in the C-terminal section; belongs to the purine/pyrimidine phosphoribosyltransferase family. Requires Mg(2+) as cofactor. [4Fe-4S] cluster is required as a cofactor.

It catalyses the reaction 5-phospho-beta-D-ribosylamine + L-glutamate + diphosphate = 5-phospho-alpha-D-ribose 1-diphosphate + L-glutamine + H2O. Its pathway is purine metabolism; IMP biosynthesis via de novo pathway; N(1)-(5-phospho-D-ribosyl)glycinamide from 5-phospho-alpha-D-ribose 1-diphosphate: step 1/2. In terms of biological role, catalyzes the formation of phosphoribosylamine from phosphoribosylpyrophosphate (PRPP) and glutamine. In Mycobacterium bovis (strain ATCC BAA-935 / AF2122/97), this protein is Amidophosphoribosyltransferase.